Here is a 291-residue protein sequence, read N- to C-terminus: Isopentenyl-diphosphate Delta-isomerase I, chloroplastic (291 aa).

The transit peptide at 1 to 52 directs the protein to the chloroplast; sequence MSTASLFSFPSFHLRSLLPSLSSSSSSSSSRFAPPRLSPIRSPAPRTQLSVR. S2 carries the post-translational modification N-acetylthreonine. Residues 20–39 show a composition bias toward low complexity; sequence SLSSSSSSSSSRFAPPRLSP. The tract at residues 20–43 is disordered; that stretch reads SLSSSSSSSSSRFAPPRLSPIRSP. K95 contributes to the substrate binding site. Residues H99 and H111 each contribute to the Mg(2+) site. Residues 109–261 enclose the Nudix hydrolase domain; it reads LLHRAFSVFL…AVKLSPWFRL (153 aa). R130 and K134 together coordinate substrate. C146 is an active-site residue. S147 provides a ligand contact to substrate. A Nudix box motif is present at residues 147–177; it reads SHPLYRESELIEENVLGVRNAAQRKLFDELG. Residues E206 and E208 each contribute to the Mg(2+) site. E208 is an active-site residue.

This sequence belongs to the IPP isomerase type 1 family. The cofactor is Mg(2+).

It is found in the plastid. Its subcellular location is the chloroplast. It localises to the cytoplasm. It carries out the reaction isopentenyl diphosphate = dimethylallyl diphosphate. The protein operates within isoprenoid biosynthesis; dimethylallyl diphosphate biosynthesis; dimethylallyl diphosphate from isopentenyl diphosphate: step 1/1. Its pathway is porphyrin-containing compound metabolism; chlorophyll biosynthesis. Its function is as follows. Catalyzes the 1,3-allylic rearrangement of the homoallylic substrate isopentenyl (IPP) to its highly electrophilic allylic isomer, dimethylallyl diphosphate (DMAPP). The sequence is that of Isopentenyl-diphosphate Delta-isomerase I, chloroplastic (IPP1) from Arabidopsis thaliana (Mouse-ear cress).